The primary structure comprises 458 residues: ATP synthase subunit beta (458 aa).

Position 148–155 (148–155 (GGAGVGKT)) interacts with ATP.

This sequence belongs to the ATPase alpha/beta chains family. As to quaternary structure, F-type ATPases have 2 components, CF(1) - the catalytic core - and CF(0) - the membrane proton channel. CF(1) has five subunits: alpha(3), beta(3), gamma(1), delta(1), epsilon(1). CF(0) has three main subunits: a(1), b(2) and c(9-12). The alpha and beta chains form an alternating ring which encloses part of the gamma chain. CF(1) is attached to CF(0) by a central stalk formed by the gamma and epsilon chains, while a peripheral stalk is formed by the delta and b chains.

Its subcellular location is the cell inner membrane. The enzyme catalyses ATP + H2O + 4 H(+)(in) = ADP + phosphate + 5 H(+)(out). In terms of biological role, produces ATP from ADP in the presence of a proton gradient across the membrane. The catalytic sites are hosted primarily by the beta subunits. The polypeptide is ATP synthase subunit beta (Francisella tularensis subsp. tularensis (strain FSC 198)).